A 237-amino-acid chain; its full sequence is BTB/POZ domain-containing protein KCTD6 (237 aa).

Positions 1–104 (MDNGDWGYMM…FYQIEPLIQC (104 aa)) are interaction with ANK1 isoform Mu17. An interaction with CUL3 region spans residues 10-110 (MTDPVTLNVG…LIQCLNDPKP (101 aa)). In terms of domain architecture, BTB spans 12 to 81 (DPVTLNVGGH…LRTSELTLPL (70 aa)). The interval 113 to 187 (PMDTFEEVVE…TFGPCDYHQE (75 aa)) is interaction with USP21.

In terms of assembly, homopentamer. Interacts with KCTD11; KCTD6 and KCTD11 may associate in pentameric assemblies. Interacts (via BTB domain) with CUL3; initially a 4:4 stoichiometry has been reported, however, electron microscopy revealed pentameric states with a five-pointed pinwheel shape. The interaction with CUL3 is indicative for a participation in a BCR (BTB-CUL3-RBX1) E3 ubiquitin-protein ligase complex. Interacts with HDAC1; probably indirect as the interaction is requires the presence of KCTD11. Interacts with USP21 (preferentially catalytic inactive form). Interacts with ANK1 isoform Mu17; detected in striated muscle. Interacts with USP11. In terms of tissue distribution, highly expressed in cerebellum and brain. Expression is down-regulated in medulloblastoma.

It is found in the cytoplasm. Its subcellular location is the myofibril. The protein localises to the sarcomere. It localises to the m line. Its pathway is protein modification; protein ubiquitination. Probable substrate-specific adapter of a BCR (BTB-CUL3-RBX1) E3 ubiquitin-protein ligase complex mediating the ubiquitination and subsequent proteasomal degradation of target proteins. Promotes the ubiquitination of HDAC1; the function seems to depend on KCTD11:KCTD6 oligomerization. Can function as antagonist of the Hedgehog pathway by affecting the nuclear transfer of transcription factor GLI1; the function probably occurs via HDAC1 down-regulation, keeping GLI1 acetylated and inactive. Inhibits cell growth and tumorigenicity of medulloblastoma (MDB). Involved in regulating protein levels of ANK1 isoform Mu17 probably implicating CUL3-dependent proteasomal degradation. The protein is BTB/POZ domain-containing protein KCTD6 (KCTD6) of Homo sapiens (Human).